Consider the following 426-residue polypeptide: UDP-N-acetylglucosamine 1-carboxyvinyltransferase 2 (426 aa).

Phosphoenolpyruvate is bound at residue 22 to 23 (KN). Arg-92 contributes to the UDP-N-acetyl-alpha-D-glucosamine binding site. Asp-116 serves as the catalytic Proton donor. UDP-N-acetyl-alpha-D-glucosamine contacts are provided by residues 121 to 125 (RPIDQ), Asp-307, and Ile-329.

Belongs to the EPSP synthase family. MurA subfamily.

It is found in the cytoplasm. It catalyses the reaction phosphoenolpyruvate + UDP-N-acetyl-alpha-D-glucosamine = UDP-N-acetyl-3-O-(1-carboxyvinyl)-alpha-D-glucosamine + phosphate. Its pathway is cell wall biogenesis; peptidoglycan biosynthesis. In terms of biological role, cell wall formation. Adds enolpyruvyl to UDP-N-acetylglucosamine. This Lactiplantibacillus plantarum (strain ATCC BAA-793 / NCIMB 8826 / WCFS1) (Lactobacillus plantarum) protein is UDP-N-acetylglucosamine 1-carboxyvinyltransferase 2.